The following is a 176-amino-acid chain: MADITEYLERSMQNCSLIDRRSSMGDGFGMSDEHIPISDRFLELSSHFSVPSHLEQCLDLKTGEIYYRSWNSGMRVKEDPRKSMSRGNYADQSSGESSGTVFSSEEVSSYYESEESSSESSPSSRKYHKEEQDEDVLVVAGCKACLMYFMVPKLFKDCPKCATQLLHFDQLHSTSP.

The EAR signature appears at 41-46 (FLELSS). A WW domain is found at 48-82 (FSVPSHLEQCLDLKTGEIYYRSWNSGMRVKEDPRK). Disordered regions lie at residues 77–106 (KEDP…SSEE) and 111–130 (YESE…YHKE). A compositionally biased stretch (low complexity) spans 93–106 (SSGESSGTVFSSEE).

In terms of assembly, may interact with BHLH122/CFLAP1 and BHLH80/CFLAP2.

In terms of biological role, may negatively regulate the cuticle development by interacting with the HD-ZIP IV transcription factor HDG1. In Arabidopsis thaliana (Mouse-ear cress), this protein is Protein CURLY FLAG LEAF 2.